Here is a 642-residue protein sequence, read N- to C-terminus: Poly(A) polymerase beta (642 aa).

ATP is bound by residues 101 to 103 (FGS), Thr-110, 114 to 116 (DID), Asp-168, Lys-229, Tyr-238, and 247 to 248 (GV). Positions 114, 116, and 168 each coordinate Mg(2+). Disordered stretches follow at residues 530-553 (SENS…GNPQ) and 620-642 (LVNH…ILGV). Polar residues predominate over residues 620–636 (LVNHPSRPSGNTATNIP).

The protein belongs to the poly(A) polymerase family. In terms of assembly, interacts with GSG1. Requires Mg(2+) as cofactor. Mn(2+) is required as a cofactor. As to expression, testis specific.

The protein resides in the cytoplasm. The protein localises to the nucleus. The enzyme catalyses RNA(n) + ATP = RNA(n)-3'-adenine ribonucleotide + diphosphate. The sequence is that of Poly(A) polymerase beta from Mus musculus (Mouse).